Here is a 249-residue protein sequence, read N- to C-terminus: Ciliogenesis and planar polarity effector 2 (249 aa).

Residues 46–249 are small GTPase-like; sequence PADVAAYKVF…VIAGLVGGAE (204 aa). GTP contacts are provided by residues 58 to 65 and 171 to 174; these read GKSGVGKT and TKLD.

It belongs to the small GTPase superfamily. Rab family. As to quaternary structure, interacts with fuz.

Its subcellular location is the cytoplasm. It localises to the cytoskeleton. The protein localises to the cilium basal body. Its function is as follows. Potential effector of the planar cell polarity signaling pathway. Plays a role in targeted membrane trafficking most probably at the level of vesicle fusion with membranes. Involved in cilium biogenesis by regulating the transport of cargo proteins to the basal body and to the apical tips of cilia. More generally involved in exocytosis in secretory cells. This chain is Ciliogenesis and planar polarity effector 2, found in Xenopus laevis (African clawed frog).